Consider the following 595-residue polypeptide: Aspartate--tRNA(Asp/Asn) ligase (595 aa).

E178 provides a ligand contact to L-aspartate. The interval 202–205 (QIFK) is aspartate. Position 224 (R224) interacts with L-aspartate. Residues 224 to 226 (RDE) and Q233 each bind ATP. H458 serves as a coordination point for L-aspartate. E488 is a binding site for ATP. R495 contacts L-aspartate. ATP is bound at residue 540-543 (GIDR).

Belongs to the class-II aminoacyl-tRNA synthetase family. Type 1 subfamily. Homodimer.

It localises to the cytoplasm. The catalysed reaction is tRNA(Asx) + L-aspartate + ATP = L-aspartyl-tRNA(Asx) + AMP + diphosphate. Functionally, aspartyl-tRNA synthetase with relaxed tRNA specificity since it is able to aspartylate not only its cognate tRNA(Asp) but also tRNA(Asn). Reaction proceeds in two steps: L-aspartate is first activated by ATP to form Asp-AMP and then transferred to the acceptor end of tRNA(Asp/Asn). The polypeptide is Aspartate--tRNA(Asp/Asn) ligase (Acaryochloris marina (strain MBIC 11017)).